The sequence spans 1505 residues: Actin cytoskeleton-regulatory complex protein PAN1 (1505 aa).

Residues 1-30 (MFNSYQATGMGYNPNQQQQQPPPPQQQQQL) form a disordered region. Positions 85–174 (DQKKFEHLFR…QKWHNEVQSF (90 aa)) constitute an EH 1 domain. One can recognise an EF-hand 1 domain in the interval 118 to 153 (LTPVVLAEIWTLSDIDKTGALLFPEFALSLHLCNMA). 2 stretches are compositionally biased toward polar residues: residues 364–393 (ATGYQQSFNTGGLQANKTGPLQPNHTGYNF) and 403–413 (ATGLQRQPTGV). Disordered regions lie at residues 364–416 (ATGY…VLQQ) and 422–441 (LQQQPTGYLQSQPTGRPGEW). In terms of domain architecture, EH 2 spans 492-581 (EKQIYDRLFQ…PELIPPADKT (90 aa)). One can recognise an EF-hand 2 domain in the interval 525–560 (LGRQDLEAIWTLADTDDVGKLNKNQFAVAMHLIYRR). The segment covering 588-604 (SLKNSLKNGGAKQTRSK) has biased composition (polar residues). The tract at residues 588 to 620 (SLKNSLKNGGAKQTRSKPMTKPDGSRFKNDDSD) is disordered. The stretch at 677–752 (RTSDREVDAL…LVKLQLKRED (76 aa)) forms a coiled coil. Disordered stretches follow at residues 867-927 (EFAR…TYST) and 948-1505 (EKLG…GRVL). Residues 872–885 (ADNTTTARSSSAYA) show a composition bias toward polar residues. Composition is skewed to basic and acidic residues over residues 960–980 (KAAEKHDEIVSKPSPSREEPP), 1034–1050 (SQRENFRENKWDEEKQY), and 1069–1079 (SQEHIVKENAK). The span at 1086–1096 (QAPTSNYSQQP) shows a compositional bias: polar residues. Positions 1109–1123 (RATETEQAESKKESE) are enriched in basic and acidic residues. Positions 1133–1175 (AAASTEPAQPAQPAQASQASKPAQPAQPANSTEPASASASEQP) are enriched in low complexity. Positions 1193 to 1208 (VDTQKISMQRNFQRGT) are enriched in polar residues. Residues 1216–1225 (DSEEEDSEDE) show a composition bias toward acidic residues. Positions 1261–1280 (PSKDEKSIGAENASGHESKM) are enriched in basic and acidic residues. Over residues 1283 to 1319 (ELSSSENTAAGVSQVNETPAQSSYEEPSLQEQSSYES) the composition is skewed to polar residues. Over residues 1321–1330 (AVPAAPSLPE) the composition is skewed to low complexity. The segment covering 1331–1453 (SVPPPAPAPE…SIPPPPPAPP (123 aa)) has biased composition (pro residues). Low complexity predominate over residues 1454–1472 (LSSNDSSLASAAAPPAGGA). The WH2 domain occupies 1474–1491 (NIGALLGQITGGKSLKKV).

It belongs to the PAN1 family. Component of the PAN1 actin cytoskeleton-regulatory complex.

The protein localises to the cell membrane. It localises to the endosome membrane. It is found in the cytoplasm. The protein resides in the cytoskeleton. Its subcellular location is the actin patch. Component of the PAN1 actin cytoskeleton-regulatory complex required for the internalization of endosomes during actin-coupled endocytosis. The complex links the site of endocytosis to the cell membrane-associated actin cytoskeleton. Mediates uptake of external molecules and vacuolar degradation of plasma membrane proteins. Plays a role in the proper organization of the cell membrane-associated actin cytoskeleton and promotes its destabilization. The protein is Actin cytoskeleton-regulatory complex protein PAN1 (PAN1) of Lodderomyces elongisporus (strain ATCC 11503 / CBS 2605 / JCM 1781 / NBRC 1676 / NRRL YB-4239) (Yeast).